Here is a 1239-residue protein sequence, read N- to C-terminus: DNA polymerase subunit gamma-1 (1239 aa).

Positions 1–68 are disordered; sequence MSRLLWRKVA…PQVLSSEGGQ (68 aa). Low complexity-rich tracts occupy residues 9-36 and 44-60; these read VAGA…SDPS and QQQQ…QQPQ. The tract at residues 43–55 is does not contribute to polymerase and exonuclease enzymatic activities; it reads QQQQQQQQQQQQQ. The Exo I signature appears at 196–200; sequence VFDVE. Asp198 acts as the Exonuclease activity in catalysis. The Exo II motif lies at 267–275; it reads VGHNVSFDR. Ser306 contributes to the DNA binding site. The tract at residues 318-340 is disordered; the sequence is GKHKVQPPTKQGQKSQRKARRGP. An Exo III motif is present at residues 395-403; sequence YCAQDVWAT. Positions 506–531 are disordered; sequence EPATASKLPIEGAGAPGDPMDQEDLG. The accessory-interacting determinant stretch occupies residues 510 to 571; it reads ASKLPIEGAG…RPQHLPGHPG (62 aa). Arg579 serves as a coordination point for RNA. Ser593 contributes to the DNA binding site. RNA is bound by residues His754, Gly763, and Lys768. The DNA site is built by Lys806 and Thr849. The segment at 858–864 is trigger loop; that stretch reads TWLTASN. Positions 863 and 869 each coordinate RNA. Residues 887-896 carry the Pol A motif; the sequence is VGADVDSQEL. Asp890, Val891, Ser893, Glu895, Arg943, Lys947, and Tyr951 together coordinate a 2'-deoxyribonucleoside 5'-triphosphate. 2 residues coordinate Mg(2+): Asp890 and Val891. Residues 943–958 carry the Pol B motif; sequence REHAKIFNYGRIYGAG. Thr1094 and Ser1095 together coordinate DNA. Positions 1134-1141 match the Pol C motif; sequence HDEVRYLV. Asp1135 lines the a 2'-deoxyribonucleoside 5'-triphosphate pocket. Asp1135 serves as a coordination point for Mg(2+).

This sequence belongs to the DNA polymerase type-A family. Heterotrimer composed of a catalytic subunit and a homodimer of accessory subunits (POLG:POLG2). Interacts with TTC3. Interacts with LIG3. Mg(2+) serves as cofactor.

The protein resides in the mitochondrion. The protein localises to the mitochondrion matrix. Its subcellular location is the mitochondrion nucleoid. The enzyme catalyses DNA(n) + a 2'-deoxyribonucleoside 5'-triphosphate = DNA(n+1) + diphosphate. The catalysed reaction is a 3'-end 2'-deoxyribonucleotidyl-deoxyribonucleotide-DNA + H2O = a 3'-end 2'-deoxyribonucleotide-DNA + a 2'-deoxyribonucleoside 5'-phosphate + H(+). It carries out the reaction a 5'-end 2'-deoxyribose-2'-deoxyribonucleotide-DNA = (2E,4S)-4-hydroxypenten-2-al-5-phosphate + a 5'-end 5'-phospho-2'-deoxyribonucleoside-DNA + H(+). With respect to regulation, inhibited by dideoxynucleotides such as antiviral agent zalcitabine. Its function is as follows. Catalytic subunit of DNA polymerase gamma solely responsible for replication of mitochondrial DNA (mtDNA). Replicates both heavy and light strands of the circular mtDNA genome using a single-stranded DNA template, RNA primers and the four deoxyribonucleoside triphosphates as substrates. Has 5' -&gt; 3' polymerase activity. Functionally interacts with TWNK and SSBP1 at the replication fork to form a highly processive replisome, where TWNK unwinds the double-stranded DNA template prior to replication and SSBP1 covers the parental heavy strand to enable continuous replication of the entire mitochondrial genome. A single nucleotide incorporation cycle includes binding of the incoming nucleotide at the insertion site, a phosphodiester bond formation reaction that extends the 3'-end of the primer DNA, and translocation of the primer terminus to the post-insertion site. After completing replication of a mtDNA strand, mediates 3' -&gt; 5' exonucleolytic degradation at the nick to enable proper ligation. Highly accurate due to high nucleotide selectivity and 3' -&gt; 5' exonucleolytic proofreading. Proficiently corrects base substitutions, single-base additions and deletions in non-repetitive sequences and short repeats, but displays lower proofreading activity when replicating longer homopolymeric stretches. Exerts exonuclease activity toward single-stranded DNA and double-stranded DNA containing 3'-terminal mispairs. When a misincorporation occurs, transitions from replication to a pro-nucleolytic editing mode and removes the missincorporated nucleoside in the exonuclease active site. Proceeds via an SN2 nucleolytic mechanism in which Asp-198 catalyzes phosphodiester bond hydrolysis and Glu-200 stabilizes the leaving group. As a result the primer strand becomes one nucleotide shorter and is positioned in the post-insertion site, ready to resume DNA synthesis. Exerts 5'-deoxyribose phosphate (dRP) lyase activity and mediates repair-associated mtDNA synthesis (gap filling) in base-excision repair pathway. Catalyzes the release of the 5'-terminal 2-deoxyribose-5-phosphate sugar moiety from incised apurinic/apyrimidinic (AP) sites to produce a substrate for DNA ligase. The dRP lyase reaction does not require divalent metal ions and likely proceeds via a Schiff base intermediate in a beta-elimination reaction mechanism. The polypeptide is DNA polymerase subunit gamma-1 (Homo sapiens (Human)).